The chain runs to 505 residues: DDB1- and CUL4-associated factor 17 (505 aa).

A run of 2 helical transmembrane segments spans residues 186–206 (VLLY…ILEI) and 222–242 (GILI…QAII).

Interacts with DDB1, CUL4A and CUL4B.

It localises to the membrane. The protein resides in the nucleus. The protein localises to the nucleolus. Its pathway is protein modification; protein ubiquitination. Its function is as follows. May function as a substrate receptor for CUL4-DDB1 E3 ubiquitin-protein ligase complex. The sequence is that of DDB1- and CUL4-associated factor 17 (Dcaf17) from Rattus norvegicus (Rat).